A 9518-amino-acid chain; its full sequence is MAIEAVEAQHRITGSQCQDPVELSLAAIRIWALQVLEWFNDNPASIKIGHAAPGGNTTFTMELNVQGDATDVVQITQDKEAQDLAWKCQEANLALVASMQVSGDPEASTLLVLYFMGDKGSRVKFDTTKTVHELEIHGWVHPAGIDMKIFPVVESARKLALQLAERLEARTPQPTVTGDMSDMPISEDDLGTIWGWNSQAAAPVERCVHDLISERARETPNAPAVCAWDGELDYEQLDKLSSRLAHYLLQLGVSPTHFVPLCFEKSVWMMVAILGVMKSGAVISTMDPTQPEDRLRTIVQQLRSAWVMCSPAQRDVATRLGASTVITLDHSLIQSLPPLGCSKLPSVDPASTLYVVFTSGSTGTPKGAIINHINFSSAITYQHEALGLSNTARVFDFASYAFDLAWGNIIHTFAAGACLCIPRESERRGDIAAAMRRLRVNHVQLTPSVARLIDPNDVPSLRLILLIGEPMSQADVDQWTPHCTLINSYGPAECTVAVTFQKISPDGSWDGSMGTGVACNTWVVDVSGESLVPPGGTGELWLEGPLVGQGYLGDSEKTIASYVETPLWLAQGAPDYPGRRGRLYKTGDLVRYNKEGRLVYVARKDDQVKVRGQRVELAEVEWHLKQALPDPTIPVVAEVITPSGGKSAILVAYLALGPEFKQDMDRVRNELHRYTNGVSETLAQQLPQYMVPSLYIPVPEIPMTGTGKTDRRRLRETSSSMTMQQLVEMQPSQGERCAPRTEMEWRLQQLWALSLGIDAESIAVGDSFLQIGGDSVAAIRLVQLARKEAVVLTVADVFNLPRLCDLAEVARLEQPKHVDIPPFSLLPKFDSAPSNACALAAAECGVPAESIADLLPCSPLQEGLLALTGKRPGDYIRCLTMELPSDVDLARFRHAWSKVVQTASVLRTRIVEVPTLGLLQVVLVEEPEWRESDEDLISFVQSEKESYMGLNTHLTRFGLVKDEYQKVSFIWTIHHALYDGWSMPLLLEQVESEYWHGDCETLAPFNSFVKYLTDSGEGAEEYWRSQLDGIEAPIFPSLPSPGYQPQAHNQLEHQVLNIDWPGNNITASTVVRAAWAILTSRYTHSSDVIFGATLTGRQAPVPYIERIAGPTIATVPIRVSVDGELGVATLLQNLQKQAVDMISYEQTGLKRIRHINSDADHATQFQTLLVVQPAARKTSRLLDERLFPEDPYDGENELASINTYALVVECHLEPNGMLLRMSFDSQVIEVHQADRMARQFEEVLRQISRENAAENLIKAVDAASPEDLAQIWRWNKKVPPVIEGCVHDLIAQRVQEQPDRPAVCAWNGQLTYEELGLHSTNLARFILSLGAGAGPGAVIPICFEKSMWTPVAMLAAIKTGGMSVTVDPSQPQERLQLIMQQTKPPLILTSPMYKSLAARLATQVIIVDAEALKGMAPSIPNNFTMPSINPASGLYIAFTSGSTGTPKGAIMTHENVRSAIDYQNEIMGTDLHSRLYDFTSYAFDVAWLNFFHAFTAGGCLCIPSDAQRKDDIPGSMDQLEANYMLLTPSTARTLDPKTLPGLKTLILVGEAVTGEDLRKWAPNVTLKNGYGPAECTGLSTIHTYEGSGDQPNTVGFAVGLRPWIVEPVHGTCLAPLGAIGELWVEGPLVGGGYLNDPDHTAESFVRDPPWLLRGGPSCPEKARQGRLYKTGDLVRYNPNGSLAYVGRKDTQVKIRGQRVELEEVESYLRQTIPGGTANTVIADMVTLRGSSSPTLVVYIALGEAATQAPESVRAELSRYTHGVVETLGELLPSYMVPNLYIPVKDIPISTTGKTDRKRLRQLGSSMRLEELLELQSRREKRLPQTELERRLRDLWADVLNIDVCHIGVDDGFFSLGGDSISAMQVSAKSRQLGFRITVNDIFKSKTIGRLAHCSQTEQALEVKASEQLDTTFALSPIQQLFFDSQPSTYGHFNQSFFLRISRSQNSDDVLHAVESVVTCHSMLRARFHQEPNGRWVQRVTPSTGKSYNYHQARVSSLDDAIPALNISQQSLDIQNGPVFAANLIDTGDMQYLFLVAHHLVIDLVSWRIILHDIEQMLTKSSVSSLPSCASLPFQTWCQLQASYASENLAPNIALPFDIDPPCIDYWGLDQAQNSYDNIVEQGFAISKSTTDLLLGAANLAFQTQPVELFQAALLHSFMQVFDDRTIPTIFTEGHGREPWDHALDLSRTVGWFTTIAPTAVTASTNLSIAEVVVRTKDGRRRTPGNGWPYFTSRYLNAAGKKSFGVSHCHEIVFNYFGLYQQLEKADALFQPCETLAGRVPDVAGHMHRFALVDVAAEVTHGCLRFDFQYNRHMQKQPAIREWITECQRSLEVVAKELILLQPRYTVSDFPLLPQTEATRRKVESLPDLGISFGEIEDIYPCSPVQQGIFLSQAKNPDLYQTRVRWCVQSVDPQSAVDAQRLARSWCQVVARHGALRTIFTQSVVSDGYSDQIVLKEVSPPIHILPPHHPKEGMAAVAGYQKSVGDRDRSLHSLLLCPTSEGSVYCQLDINHAIIDAISIGIIKQDLRAAYDGTLPSEPAPVYSNYIQHIQSSSSSEAREYWKRRVVGAEPCIFPVLNQNQAEPNARGIASLPVTQEIYDSLRSFCRIHGLTPSNVLHLAWGLVLRCYTSNESVCFAYLSSGRDVPVDRADGVVGPFINILVSHAKITSDRSLLSIMQANQAEYLEGLEYQHFPLAEVRHYLNADAESFFNTALSVQSGGLSQQQDPSGISFDEETWDDPNEYDMATSVFLREDDAQVSINYSHKLLSETQAASVAGSFLEALRVIINKPSASVDNLQIASSQDIDAIWNWNRQVPKRVSSSVTDLIVARIQQQPEAPAVCSWDGELTYRDLDRLSSRLAQQLLGLGIAPRSIIPLCFEKSMWVPVAMLAVMKAGCAVVGMDPEQPKERLQLIIAKTQPALILTSPRQRDLAQSLLGMVVTVTLDSLPAAHISDKYGFPPSDPTDTLFVAFTSGSTGTPKGAIISHENMCSAITHHADACGITTSSRVFDFASYAFDAAWFNFVYPLVVGGCMCIPSDEQRTNRVAECMEQMRVNYALFTSSMARTIDPTTVPSLETLVLGGEALGAEDMDIWKHINLKGAYGPAECTIIATFNDFKHRNEHPRTLGHTVGLTAWVVEPLRSKSLVPIGAIGELWLEGPLVGPGYLRDPEKTSASRAEDPAWLVHGTSRHPGRRGYLYKTGDLVQYREDGALVYINRKDNQVKIRGQRVELGDVEYHARRALSANATQDLVVEVIYPKGRNNPILVAFISLGEQASGSAESIREALALCTKGVEESLKQHLPSYMVPSMYVPVAEIPLTATAKTDRRRIQQIGSSLTLEQLAELQPSRRKARAPATASEQRLQKLWATVLERETSSISADDSFLRIGGDSIGAIRLAQLAADHGLMLTVATIFKSPTLCDMAQTLKVESVSEQVIQPLSLLKLQIDSDQALKQAAAQCDLEVSSIEDVLPCTPLQEGLLSLTVKRPGAYVIRQVLRLHDQIDVQRFRNACNYVATSTAILRTRVIDLHEQGLVQVVTKQIPEWQESTSLAAFLRLDEQNPVGLGTALARFALVHDRVDDRIYSVWTLHHALYDGWSMPLLLKEVEKAYFGVKTEGLGSFAGFVKHITELGAETDEYWKNEFDGLLAVQFPVLPSPHYQPQAQEVMHHEITNLQWLQDNTTPSTAIRAAWSVLVSHYTQSSDVIFGSTVTGRQASIPKVELVEGPTIATVPIRVEIQEKATVANLLEQIQKQSVDMIPFEQAGLQRIRRLSPETEQGCAFQTFLVVQPAPQPAKAEHDDWIFEEQSNDYTPGSINNFNSYALLLECQLTADGVSINISYDAHIVTQVQVETIAGQFEHVLRQVCKEASQYLEVKDIEAASEDDIRRIWDLNSPTPRAVETCMHDLILQQAHQRPNASAICGWDGELTYGQLDDLSTRLAHRLVEAGVQPGAIVALCLEKSMWMPVAMLGVVKAGATGVTMDITQPEERLRLIVDQVQPPLIVSSVEAKNLASRLTEKAVLVISEEALEHQLRPQMVTKKGLPPVQSTAGLYVAFTSGSTGVPKGALMTHGNVASAVYHQQAVLGYKPTDRVFDFSSYAFDAAWFNFLHTMAAGACLCIPSEDERRSDVTECMRRMRVTYAAITPSTARLINPASVPELRCLLLGGETVSKQDITQWCPFVNLINIYGPAECSAISTTFTYGDSDHPSGTIGAGRGMATWVVEPSRGRHLSPYGAVGELWLEGPLVGAGYVGRPDINATTFIHDPPWLLRGGAGISGRRGRLYRTGDLVRYNSDGTLLYVGRRDAQVKIRGQRVELTEVEHYLYESLPTGSRSTPFAVEVITPRETNNPILVAFFGMGQLEWGSTEVVREALRKHTQDVQAQMAELLPSFLVPGIFIPVAEIPVTATGKIDKRSLRQLGEQSSLDELVALQPTQGERQTPTTITECRILELWAKTLNVNPERISIHDDFFTLGGDSISAMQLSAKSRSTGLQITVPAIFKHRTIARLAACTTPVDQIMNQSTERTGVPFALSPIQQLFVNTQQGADNHFNQSFLVRITQSTSSDQLKRAIEAIVAHHSMLRARFKSTPENIWTQQILPSSAGSYIFSSHEVISFQDSSDIVTRSQTSLDIENGPLLAVDLLNTQKDGQYLFLVAHHMVIDLVSWRILLADLEEYLTTGTLSGFVPMSFQTWCELQADYARAHLFPKDVLPFSPEPPQYDYWGVAPSTNTFDNLAKGSVILSKEVTEILLGSANAAFNTQPVEILHAALLHSFTKAFHDRSPPSIFSEGHGREPWTSSIDLSRTVGWFSTIYPVVATVDPDEKISALARRIKDTRRCVPQNGWSYFTSRYLNPTGKKDFQINGPVEVIFNYLGLYQQLERQDSLFHVSEMPVDVHELSDIASKLCRFALIDISASVLQGRLRVDYLYNNRMRNQEGIRKWIQECQCSLEDAAQELPSLQPTYTICDFPLLHMSELGLEKLGSALADAGVSYGQVEDIYPCSPIQQGILMSQVKNPSLYQTTIKWLAESTDKGSSLDVSRLKKAWQLVVDRHPMLRTKFIDSLMPDGLKDQLVLKSLEAEVHVITSGQRDASDTAIPRENNAFLLIYTTPSGAVCELLINHALIDASSLVILKQELCAAYDGSLSNSMPGLYSEYILFLQSLSEQKAHEYWHHLLEGVNPCIFPSLGARNPRGPRSKSVISRKLDPNMHDLLRLFCMDHGLTTSNVFHIAWGLVLRAYTGLETVCFGYLTSGRDIPVSGAERTIGPFINMLTSRVSLESNESLLSLAQKNQGQYLSSLEFQHYPLAKIFHFLDLPGKELFNTALSVQANRLVSNNTASSISLTEMGGDDPTEYDIMMNIGLDENEIAINFTYNASMLSTSHAENVLNLFIQAVRQTITHSDQTPHQANLISKEDLRRILNWNAMAPAAVNASIGDMISEQAQNQPDAPAVCACDGDLTYKELDYLSTRLASHLHGLGVTPGSMVPLLFEKSMWMSVAALAVIKSGGAMVGLDIEQPQDRLRTILEQTQGSVIVTSPTMRSKGNSLGMDTVVIVDRASMDQLEPVRGTVLPSIDPASPLYIVFTSGTTGTPKGVVISHCNVASAITYQQDSLGLNSASRVLDFVSYAFDVAWGTILHTFVAGACLCVPEESERRGDIGAAMRRLQVNYAVLTPTIARLLDPQSIPLVQTMVLTGEPLDPIDVQKWALQTQLVNAYGPSETTIWATLERYPFSENEPSLGRGKGCVTWVVDPNREAQLCPIGCTGELWLEGPIVGLGYLNDTDKTAASFLPAPTWLTQGESSRRPGRLYKTGDLVRYNLDGTLIYAGRKDGQVKIRGQRVELGEVEYHIQQAMPTGTGVPVVAEVITPKASANSLLVAYLALGDRATGSTEGIRNALSYYTNIFTQCLPESLPGYMVPNIYIPVTEIPMTTTGKTDRRQLRTIGSDQTLAQLAELQPSRGKERVASSPVELALQRLFSEVLNIDLDIVGTDDSFFLLGGDSITAMQLSARSQSVDFYITVADIFKHKTVAQLAKNSGLQAAETSSIHIAETVDTPFELSPIQRMFFDFQDIRKNMFNQSFLVRVSRPHLPDQVKEGIEQLVVRHSMLRARFIQVDGAWTQKILADATCCYEFQRHDIPSLHEAKSLLNQSQQILDIEQGPIFVVYLINTNDEGQFLFMVAHHLVVDLVSWRILLGELEEYLVHGKVAGPAPLSFQAWCQLQADHAVNRSPAEDFPYDVPPLMYDYWKFTPGVSPNTIGDTTQCSIVIEKSLTDQLLGSANTVFNTQPVEILHAALLYSFAQSFPDRVSPAIFTEGHGREAWNSAIELGRTVGWFTTVYPVVVDAIKSDRLIDIVRRSKDYRRQIPANGRPYFASRYLNPAGRQAFHLDGPVEIIFNYFGLYQQLERKDALFQQSDVLISDLMEAAPELSRFALIDVAAYVAQGKLHVDFLYNRHLQHGSKIRDWIIECEHSLVMAAHQLPLLSPSYTACDFPLMPLGESSLHLLINEALPGLGLTFGQVEDIYPCTPIQEGILTSQAKNPALYWTRVRWLVSSTTGSLVDRNRLGRAWQQVVDRHPILRTIFIDSVRSGGVKDQVVIKNVKSDVQLLGTDKPADPLTGVQWHTDVASKRDSPQHALALSQSASGSVFCDLEINHAMVDAYSLGLLKYEISRAYMGQISSEAGPSYEAYVRHIQSLPASAEQFWAEYLNEVPACNFPVLAEPNPDHTNSRETLSLDMDIKTHLALRKFCQQYEMTPSSVFHLAWGLVIRAYTGLDTVCFGYLTSGRDIPIPGVDRAIGPFINMLVSRINLSKGSSALETLQEDQRDYLAALQYQHTPLAKILEISGRPGKGLFNTGISVQNNASAQEPEPQEVIFTDVGGLIPPSTSLLSTDGSQRIATLFLQAVEGVIHNPNQVPRDINLVSEQDIQQIWSWNAQVPQAVKTCVHDLIAKQACLRPNSSAIHAWDGDATYKELDHFSSRLAHHLVDLGIRANDAVPLCFEKSMWMPVAALGVIKAGGACVALDTTQPEERLRGILQDIQPSFVLSSRANEHLTRRITDTHVLFVERPLFPQLPVPSCSDLPVVTPSSPVYVVFTSGSTGKPKGTAISHTNFASAIVHQPDLLALNPDARVFDFVSYAFDVAWSNILHTFAAGACLCIPSESVRREGTAQAMDAMKVTHVQFTPSMARTIDPNQVTSLRTLILGGEALSKQDIRLWAPRVDLRVAYGPAECTVAAAMTNVTQESGQVGKIGHGVGLNTWVVGLSEDAGLVPVGAVGELWLEGPLVGLGYIGQPQKTAESFVQDPKWLMNGPRGRSGRVYRTGDLVRYNPDGTLVYVGRKDSQVKVRGQRVELEETEYHIHAALSDGIGAVADVISPQGSANAMLVAYLDVGVTVDASLETIHAAMRPYTTGLADSLAQCLPQFMIPTMYIPVAGIPMTLTGKTDRRRLRSIGSSLSLDRLADIQPTRGQRQLPRTEVEMQLQQLWAEVLNIDPQQIGAHDSFFSLGGDSISAMQLSAKSRSAGLRVTVPDIFKLATIAGLAPSAASQAQKVYDWECTEGEAFELSPIQQMFIQTSQCNHFNQSFFLRITRPVSSTDVRRALEAVVTEHAILRVRFDHIVDEQWTQRVIPYSPECYKYEQHTIESFSDVSPILDRSQKSLDIQAGPIFSADLIDTGTQGHYLFLVAHHLAIDLVSWRIILADMEEHLTTNKISGFKPLPFQAWCQLQSEYARDQLPPEAAFPVEIPPPQDYWGLDPTTNTMGNTIHSTFSLSKDDTDSLLGCANMAFDTQLVEILQAALLHSFVYTFQDRPAPTIFSEGHGREPWDSAIDLSRTVGWFTTMSPTLVSASALSNDSLQTVVRRTKDGRRQVPGHGWPYFTSRYLNEKGKKVFGGYGAPEITFNYLGFYQQLEREDSLFAPASPPEGTLSDVAEDMGRFALIEVMASVSAGCLEFSFMFNCNTRHRDQIGTWITRYEHSLQTAARELPHHPRSYTQCDFPLLSLSETALLKLNDKILPGLGLSYGQVEDIYPLTPIQQGILLSQAKSPHLYWTRIRWLVQSASPSSVNLDRLVEAWKRVVSRHSALRTVFVESPSPHRFEDQLVMRTCEPTIHLLSSSDPPAALARHWESRQEPKPLHSLVICSTPSGDNVLCDLEMNHAITDATSTALLKREICAAYDDLLDATPGPLYRDYIRHIQSVGTEASLEYWKDYLEGVPPCIFPSQREPQSGENKARASMTQLLDGDLHSRLRSFCQKNEFTPANLFHLAWALLLRCYTGSETVCFGYLLSGRDVPVEGVEKTVGPFINLLVSRLHLGGSEPLAAVIERNQAEFVSSLNHQHSSLVQILRSLDEPVDALFNTVLSVQGMDLKSHDKDDLFSLRLDEQDGHDPTEYDIMLNVGLGSEETAITFSYYGSLLSDQQARNLVQSLLQAIEEIIRTPSKTAAQVDLAGRHDQEIIWNWNCAVPPTVDTPVHELIAMQCQQRPDATAICAWDGEFTYQELDCLSTRLALHLGALGVGANSIVPLYFEKSRWMPVSVLAVMKAGGASVAMDANQPLERLRAIVQQVQPEVLLSSRENYPVAHRLGAQRVVPVHDAALSSVIVPADTVCPSIAASQRLYVTFTSGSTGTPKGVVISHSNFSSALVQQQESLSFGPNVRVFDFVSYAWDVSWSNLLRSLVAGGCLCIPHESQRRANIEKAMCDFRVNYATITPTVARLLNPAEVPYLNTLALIGEPLTQADLVQWTPHVGEIINTYGPSECPGCVTVNRIRRDCLQDPHLGSASACNTWIVDPTDADRLLPVGGIGELWLEGPLIGLGYLGLPERSAENFIENPSWLRRGGPGCSGRDGRLYRTGDLVRYNPDGSLVYISRKDAQVKIRGQRVELGEVEYHVRQGILDIDDASVVAGVMTPRGSSSPMLVCFLGLGDLASGSADQIRAVLGERTRGLDEYLGARLPRYMVPSTYIPVVDIPMTVTGKTDRRRLTQAGASRTLAELAELQPSRGECQPLTTEMEWRLQGLWAAVLGLDASLIAADDSFLRIGGDSITAIRLGQRASEEGFSLAVPDIFNNPRLCDMAHYLREGQSIYRDPQPFSLLSCPPGSLPSFLETSVLPFLEWNKDHITDVYPTTELQDLYVSSALAARMGEIEHIYMDLPAGVDLSRVHQSCLRLWQHLDILRTVFIVDGHRHIQVVLNDVEPDISAHEVHGDLTACAEKIYRSDLQSPQQLGRCFTRFFIIHNPDGQARLTIRFSHSQYDGFSLPLIFSCFATLYRGEALPSSPKFSGYIRHVQEQQQAARPYWRSLLLQSSITPVKPLSAANGDYPLSQHVGSLVESKTIAPAPAGRQGFTAATIFTSLCARMLSRITGATDVVFGQIVSGRASLPSSLQNVVGPCVNTIPVRVRIIPGQGLEQQLASVHEQHIQGLPYETSQFGDIAVNCTDWPDESRTPELVVQFQNLDNLEHDAGTSILGANSTLAAYQRKGRPVFPDFIFVLAKPKGDGWELSVSGSSKFHTQHTLDTVLDELTRQVVDC.

The interval 214–611 (ERARETPNAP…ARKDDQVKVR (398 aa)) is adenylation 1. The region spanning 738-814 (APRTEMEWRL…DLAEVARLEQ (77 aa)) is the Carrier 1 domain. Ser775 is subject to O-(pantetheine 4'-phosphoryl)serine. Residues 853–1250 (DLLPCSPLQE…EEVLRQISRE (398 aa)) form a condensation 1 region. An adenylation 2 region spans residues 1292–1695 (QRVQEQPDRP…GRKDTQVKIR (404 aa)). Residues 1822-1898 (LPQTELERRL…RLAHCSQTEQ (77 aa)) enclose the Carrier 2 domain. Residue Ser1859 is modified to O-(pantetheine 4'-phosphoryl)serine. Residues 1911 to 2336 (TFALSPIQQL…QRSLEVVAKE (426 aa)) are epimerization 1. Residues 2376 to 2803 (EDIYPCSPVQ…DNLQIASSQD (428 aa)) are condensation 2. Residues 2829 to 3224 (RIQQQPEAPA…NRKDNQVKIR (396 aa)) are adenylation 3. Residues 3352–3428 (APATASEQRL…DMAQTLKVES (77 aa)) form the Carrier 3 domain. An O-(pantetheine 4'-phosphoryl)serine modification is found at Ser3389. A condensation 3 region spans residues 3465 to 3869 (EDVLPCTPLQ…QVCKEASQYL (405 aa)). The adenylation 4 stretch occupies residues 3906–4307 (QQAHQRPNAS…GRRDAQVKIR (402 aa)). The 77-residue stretch at 4436–4512 (TPTTITECRI…RLAACTTPVD (77 aa)) folds into the Carrier 4 domain. O-(pantetheine 4'-phosphoryl)serine is present on Ser4473. An epimerization 2 region spans residues 4527 to 4954 (ALSPIQQLFV…EDAAQELPSL (428 aa)). Residues 4990 to 5411 (VEDIYPCSPI…ANLISKEDLR (422 aa)) are condensation 4. The adenylation 5 stretch occupies residues 5433–5829 (SEQAQNQPDA…GRKDGQVKIR (397 aa)). The 77-residue stretch at 5957–6033 (VASSPVELAL…QLAKNSGLQA (77 aa)) folds into the Carrier 5 domain. At Ser5994 the chain carries O-(pantetheine 4'-phosphoryl)serine. Positions 6050–6470 (ELSPIQRMFF…CEHSLVMAAH (421 aa)) are epimerization 3. Positions 6512–6856 (VEDIYPCTPI…TGISVQNNAS (345 aa)) are condensation 5. The interval 6947–7338 (LRPNSSAIHA…GRKDSQVKVR (392 aa)) is adenylation 6. Residues 7464–7540 (LPRTEVEMQL…GLAPSAASQA (77 aa)) form the Carrier 6 domain. Ser7501 carries the post-translational modification O-(pantetheine 4'-phosphoryl)serine. The epimerization 4 stretch occupies residues 7555–7978 (ELSPIQQMFI…LQTAARELPH (424 aa)). The tract at residues 8016 to 8444 (VEDIYPLTPI…QVDLAGRHDQ (429 aa)) is condensation 6. The adenylation 7 stretch occupies residues 8468-8867 (MQCQQRPDAT…SRKDAQVKIR (400 aa)). Residues 8995–9071 (PLTTEMEWRL…DMAHYLREGQ (77 aa)) enclose the Carrier 7 domain. Ser9032 is modified (O-(pantetheine 4'-phosphoryl)serine). The segment at 9111–9454 (DVYPTTELQD…DNLEHDAGTS (344 aa)) is condensation 7.

It belongs to the NRP synthetase family.

It functions in the pathway secondary metabolite biosynthesis. Functionally, nonribosomal peptide synthetase; part of the gene cluster that mediates the biosynthesis of the unguisins, gamma-aminobutyric acid (GABA)-containing fungal cyclic heptapeptides with the amino acid sequence cyclo-(D-Ala1-D-Val2-L-Leu3-beta-MePhe4-D-Ala5-D-Trp6-GABA7) for unguisin H and cyclo-(D-Ala1-D-Ala2-L-Leu3-beta-MePhe4-D-Ala5-D-Trp6-GABA7) for unguisin I. UngA' is the main enzyme within the cluster which condenses the 7 residues using its respective 7 modules. The terminal condensation domain (Ct) is involved in cyclization with D-alanine and thereby releasing of unguisins H and I. The alanine racemase ungC' provides D-alanine, which is then accepted by the first adenylation domain of ungA', whereas the methyltransferase ungE' provides the (2R,3R)-beta-methylphenylalanine residue incorporated by the module 4. Finally, the hydrolase ungD' catalyzes the hydrolysis between the D-tryptophan and GABA residues of unguisins H and I to produce the corresponding linear peptides. The chain is Nonribosomal peptide synthetase ungA' from Aspergillus campestris (strain IBT 28561).